The sequence spans 74 residues: Large ribosomal subunit protein bL31 (74 aa).

Zn(2+) contacts are provided by C16, C18, C37, and C40.

Belongs to the bacterial ribosomal protein bL31 family. Type A subfamily. Part of the 50S ribosomal subunit. Zn(2+) serves as cofactor.

Its function is as follows. Binds the 23S rRNA. The sequence is that of Large ribosomal subunit protein bL31 from Koribacter versatilis (strain Ellin345).